The chain runs to 348 residues: Ion-translocating oxidoreductase complex subunit D (348 aa).

A run of 3 helical transmembrane segments spans residues 20–39 (LMKW…TYFF), 72–91 (ALRD…AIPP), and 120–140 (PFNP…VQMT). Position 187 is an FMN phosphoryl threonine (T187). 5 consecutive transmembrane segments (helical) span residues 214 to 234 (LAGV…LVLI), 241 to 261 (WHIP…FLMF), 266 to 286 (TASP…FFIA), 300 to 320 (LVFG…GGFP), and 321 to 341 (DGVA…DYYT).

The protein belongs to the NqrB/RnfD family. The complex is composed of six subunits: RnfA, RnfB, RnfC, RnfD, RnfE and RnfG. Requires FMN as cofactor.

The protein localises to the cell inner membrane. Its function is as follows. Part of a membrane-bound complex that couples electron transfer with translocation of ions across the membrane. This chain is Ion-translocating oxidoreductase complex subunit D, found in Vibrio atlanticus (strain LGP32) (Vibrio splendidus (strain Mel32)).